A 156-amino-acid chain; its full sequence is Small ribosomal subunit protein bS18c (156 aa).

Residues 1–54 (MYTSKQPFLKSKQPFRKSKQPFRKSKQPFRKFKKPFRKSKQPFRRRPRIGPGDR) are disordered. The span at 13-48 (QPFRKSKQPFRKSKQPFRKFKKPFRKSKQPFRRRPR) shows a compositional bias: basic residues.

The protein belongs to the bacterial ribosomal protein bS18 family. Part of the 30S ribosomal subunit.

The protein resides in the plastid. It is found in the chloroplast. In Lolium perenne (Perennial ryegrass), this protein is Small ribosomal subunit protein bS18c.